Here is a 181-residue protein sequence, read N- to C-terminus: Inner membrane-spanning protein YciB (181 aa).

The next 5 membrane-spanning stretches (helical) occupy residues 8 to 28 (FPII…ATAA), 53 to 73 (ITLI…NAIF), 76 to 96 (WKPT…HFFG), 121 to 141 (LSWA…VYNF), and 149 to 169 (FKLF…AFYI).

It belongs to the YciB family.

It is found in the cell inner membrane. Functionally, plays a role in cell envelope biogenesis, maintenance of cell envelope integrity and membrane homeostasis. This is Inner membrane-spanning protein YciB from Coxiella burnetii (strain CbuK_Q154) (Coxiella burnetii (strain Q154)).